Consider the following 943-residue polypeptide: WD repeat-containing protein 3 (943 aa).

5 WD repeats span residues 21–60, 63–102, 105–144, 147–186, and 189–228; these read SQKGNIVFVTLRGEKGRYVAVPACEHVFIWDLRKGEKILI, GLKQEVTCLCPSPDGLHLAVGYEDGSIRIFSLLSGEGNVT, GHKAAITTLKYDQLGGRLASGSKDTDIIVWDVINESGLYR, GHKDAITQALFLREKNLLVTSGKDTMVKWWDLDTQHCFKT, and GHRTEVWGLVLLSEEKRLITGASDSELRVWDIAYLQEIED. Phosphoserine occurs at positions 240 and 241. A Phosphothreonine modification is found at Thr257. A WD 6 repeat occupies 277 to 316; that stretch reads EGRDRVVNLAVDKTGRILACHGTDSVLELFCILSKKEIQK. The tract at residues 326-345 is disordered; it reads RKKAKLHSSKGEEEDPEVNV. WD repeat units follow at residues 413–451, 453–493, 494–533, 547–586, 589–630, 631–670, and 673–712; these read GHRSDVRTLSFSSDNIAVLSAAADSIKIWNRSTLQCIRT, TCEY…ETID, AHDGALWSMSLSPDQRGFVTGGADKSVKFWDFELVKDENS, QLDEDVLCVSYSPNQKLLAVSLLDCTVKIFYVDTLKFFLS, GHKL…KSLF, AHDDSVMYLQFVPKSHLFFTAGKDHKIKQWDADKFEHIQT, and GHHQEIWCLAVSPSGDYVVSSSHDKSLRLWERTREPLILE. Residues Lys474 and Lys529 each participate in a glycyl lysine isopeptide (Lys-Gly) (interchain with G-Cter in SUMO2) cross-link. Ser726 carries the post-translational modification Phosphoserine.

It belongs to the WD repeat WDR3/UTP12 family. In terms of assembly, part of the small subunit (SSU) processome, composed of more than 70 proteins and the RNA chaperone small nucleolar RNA (snoRNA) U3. In terms of tissue distribution, ubiquitous.

It is found in the nucleus. The protein resides in the nucleolus. Functionally, part of the small subunit (SSU) processome, first precursor of the small eukaryotic ribosomal subunit. During the assembly of the SSU processome in the nucleolus, many ribosome biogenesis factors, an RNA chaperone and ribosomal proteins associate with the nascent pre-rRNA and work in concert to generate RNA folding, modifications, rearrangements and cleavage as well as targeted degradation of pre-ribosomal RNA by the RNA exosome. This is WD repeat-containing protein 3 from Homo sapiens (Human).